We begin with the raw amino-acid sequence, 187 residues long: MKIGKLNSIVIALFFKLLVACSIGLVERTNAALESSSKDLKNKILKIKKEATGKGVLFEAFTGLKTGSKVTSGGLALREAKVQAIVETGKFLKIIEEEALKLKETGNSGQFLAMFDLMLEVVESLEDVGIIGLKARVLEESKNNPINTAERLLAAKAQIENQLKVVKEKQNIENGGEKKNNKSKKKK.

The first 20 residues, 1-20 (MKIGKLNSIVIALFFKLLVA), serve as a signal peptide directing secretion.

Belongs to the decorin-binding protein family.

Binds to decorin which may mediate the adherence of B.burgdorferi to collagen fibers in skin and other tissues. In Borreliella burgdorferi (strain ATCC 35210 / DSM 4680 / CIP 102532 / B31) (Borrelia burgdorferi), this protein is Decorin-binding protein B (dbpB).